The following is a 566-amino-acid chain: Urease subunit alpha (566 aa).

In terms of domain architecture, Urease spans 128–566; the sequence is GGVDTHIHFI…LPMAQRYFLF (439 aa). 3 residues coordinate Ni(2+): His133, His135, and Lys216. Lys216 is subject to N6-carboxylysine. His218 is a binding site for substrate. The Ni(2+) site is built by His245 and His271. The Proton donor role is filled by His319. Asp359 provides a ligand contact to Ni(2+).

It belongs to the metallo-dependent hydrolases superfamily. Urease alpha subunit family. In terms of assembly, may form a heterohexamer of 3 UreC (alpha) and 3 UreAB (gamma/beta) subunits. May also form a heterotrimer of UreA (gamma), UreB (beta) and UreC (alpha) subunits. Three heterotrimers associate to form the active enzyme. The cofactor is Ni cation. In terms of processing, carboxylation allows a single lysine to coordinate two nickel ions.

The protein resides in the cytoplasm. It carries out the reaction urea + 2 H2O + H(+) = hydrogencarbonate + 2 NH4(+). Its pathway is nitrogen metabolism; urea degradation; CO(2) and NH(3) from urea (urease route): step 1/1. The protein is Urease subunit alpha of Pseudomonas savastanoi pv. phaseolicola (strain 1448A / Race 6) (Pseudomonas syringae pv. phaseolicola (strain 1448A / Race 6)).